A 145-amino-acid polypeptide reads, in one-letter code: Large ribosomal subunit protein uL11 (145 aa).

This sequence belongs to the universal ribosomal protein uL11 family. In terms of assembly, part of the ribosomal stalk of the 50S ribosomal subunit. Interacts with L10 and the large rRNA to form the base of the stalk. L10 forms an elongated spine to which L12 dimers bind in a sequential fashion forming a multimeric L10(L12)X complex. In terms of processing, one or more lysine residues are methylated.

Its function is as follows. Forms part of the ribosomal stalk which helps the ribosome interact with GTP-bound translation factors. This Hydrogenobaculum sp. (strain Y04AAS1) protein is Large ribosomal subunit protein uL11.